The chain runs to 85 residues: Acyl carrier protein (85 aa).

The region spanning Asp4–Leu79 is the Carrier domain. At Ser39 the chain carries O-(pantetheine 4'-phosphoryl)serine.

The protein belongs to the acyl carrier protein (ACP) family. Post-translationally, 4'-phosphopantetheine is transferred from CoA to a specific serine of apo-ACP by AcpS. This modification is essential for activity because fatty acids are bound in thioester linkage to the sulfhydryl of the prosthetic group.

It localises to the cytoplasm. It participates in lipid metabolism; fatty acid biosynthesis. Functionally, carrier of the growing fatty acid chain in fatty acid biosynthesis. The polypeptide is Acyl carrier protein (Petrotoga mobilis (strain DSM 10674 / SJ95)).